The chain runs to 285 residues: SLAM family member 9 (285 aa).

The N-terminal stretch at 1-17 (MGALLWSLLLLLQEAKG) is a signal peptide. Topologically, residues 18–232 (FSGDDEDPEE…YPEKPSMLCL (215 aa)) are extracellular. Residues 25-126 (PEEVIGVLQE…SHITKSYHLR (102 aa)) form the Ig-like V-type domain. N-linked (GlcNAc...) asparagine glycosylation is found at asparagine 37, asparagine 97, asparagine 141, asparagine 149, asparagine 175, and asparagine 206. The Ig-like C2-type domain occupies 134-213 (PHITVNSNIS…VSNISSRRIS (80 aa)). Cysteines 154 and 198 form a disulfide. Residues 233-253 (LVKSLFLLLLLAILTVGLCLF) form a helical membrane-spanning segment. At 254–285 (RAQKSYETPRVRKLKRNRIKLRKKGKSGPTPV) the chain is on the cytoplasmic side.

The protein localises to the membrane. Its function is as follows. May play a role in the immune response. This Mus musculus (Mouse) protein is SLAM family member 9 (Slamf9).